The sequence spans 143 residues: Type II secretion system core protein G (143 aa).

Positions 1-8 are cleaved as a propeptide — leader sequence; the sequence is MQKRRQSG. At F9 the chain carries N-methylphenylalanine. The helical transmembrane segment at 9–29 threads the bilayer; sequence FTLLEVMVVIVILGILASLVV. Residues 70 to 92 are disordered; the sequence is QGLDALVNKPTAAPEPRSYRDGG.

Belongs to the GSP G family. Type II secretion system is composed of four main components: the outer membrane complex, the inner membrane complex, the cytoplasmic secretion ATPase and the periplasm-spanning pseudopilus. Forms homomultimers. Post-translationally, cleaved by the prepilin peptidase. Methylated by prepilin peptidase at the amino group of the N-terminal phenylalanine once the leader sequence is cleaved.

It localises to the cell inner membrane. Core component of the type II secretion system required for the energy-dependent secretion of extracellular factors such as proteases and toxins from the periplasm. Pseudopilin (pilin-like) protein that polymerizes to form the pseudopilus. Further polymerization triggers pseudopilus growth. The sequence is that of Type II secretion system core protein G (exeG) from Aeromonas hydrophila.